A 259-amino-acid chain; its full sequence is Flagellar L-ring protein (259 aa).

Residues M1–G15 form the signal peptide. A lipid anchor (N-palmitoyl cysteine) is attached at C16. C16 is lipidated: S-diacylglycerol cysteine.

This sequence belongs to the FlgH family. As to quaternary structure, the basal body constitutes a major portion of the flagellar organelle and consists of four rings (L,P,S, and M) mounted on a central rod.

Its subcellular location is the cell outer membrane. The protein resides in the bacterial flagellum basal body. Assembles around the rod to form the L-ring and probably protects the motor/basal body from shearing forces during rotation. In Vibrio vulnificus (strain YJ016), this protein is Flagellar L-ring protein.